Consider the following 288-residue polypeptide: Polyisoprenoid diphosphate/phosphate phosphohydrolase PLPP6 (288 aa).

The segment at 1–82 (MPSPKARSGS…STGGGGQQLP (82 aa)) is disordered. The Cytoplasmic segment spans residues 1–127 (MPSPKARSGS…EDSSWGSVRP (127 aa)). Residues 128–148 (LMKLIEVSGHGIPWLAGAAYC) form a helical membrane-spanning segment. The Lumenal segment spans residues 149–161 (LYKSDSPAGQEVM). Residues 162-182 (LNLLMALVLDVVLVGVLKAVV) form a helical membrane-spanning segment. The segment at 179–187 (KAVVRRRRP) is phosphatase sequence motif I. The Cytoplasmic portion of the chain corresponds to 183-223 (RRRRPAHNRMDMFATFSVDSYSFPSGHATRAAMCARFLLNH). The segment at 206–209 (PSGH) is phosphatase sequence motif II. Histidine 209 acts as the Proton donors in catalysis. The chain crosses the membrane as a helical span at residues 224–244 (LVLAAPLRVLVLLWATIVGFS). The tract at residues 244–255 (SRVLLGRHNVTD) is phosphatase sequence motif III. Over 245–255 (RVLLGRHNVTD) the chain is Lumenal. Histidine 251 serves as the catalytic Nucleophile. A helical membrane pass occupies residues 256–276 (VAFGFFMGYWQYNLVEMLWLS). Residues 277–288 (PVMLQSAIGQLH) lie on the Cytoplasmic side of the membrane.

It belongs to the PA-phosphatase related phosphoesterase family.

The protein localises to the endoplasmic reticulum membrane. Its subcellular location is the nucleus envelope. The protein resides in the nucleus inner membrane. The enzyme catalyses presqualene diphosphate + H2O = presqualene phosphate + phosphate + H(+). The catalysed reaction is presqualene phosphate + H2O = presqualene alcohol + phosphate. It carries out the reaction (2E,6E)-farnesyl diphosphate + H2O = (2E,6E)-farnesyl phosphate + phosphate + H(+). It catalyses the reaction (2E,6E)-farnesyl phosphate + H2O = (2E,6E)-farnesol + phosphate. The enzyme catalyses (2E,6E,10E)-geranylgeranyl diphosphate + H2O = (2E,6E,10E)-geranylgeranyl phosphate + phosphate + H(+). The catalysed reaction is (2E,6E,10E)-geranylgeranyl phosphate + H2O = (2E,6E,10E)-geranylgeraniol + phosphate. It carries out the reaction (2E)-geranyl diphosphate + H2O = (2E)-geranyl phosphate + phosphate + H(+). It catalyses the reaction (2E)-geranyl phosphate + H2O = (2E)-geraniol + phosphate. The enzyme catalyses 1,2-dihexadecanoyl-sn-glycero-3-phosphate + H2O = 1,2-dihexadecanoyl-sn-glycerol + phosphate. In terms of biological role, magnesium-independent polyisoprenoid diphosphatase that catalyzes the sequential dephosphorylation of presqualene, farnesyl, geranyl and geranylgeranyl diphosphates. May regulate the biosynthesis of cholesterol and related sterols by dephosphorylating presqualene and farnesyl diphosphate, two key intermediates in this biosynthetic pathway. May also play a role in protein prenylation by acting on farnesyl diphosphate and its derivative geranylgeranyl diphosphate, two precursors for the addition of isoprenoid anchors to membrane proteins. Has a lower activity towards phosphatidic acid (PA), but through phosphatidic acid dephosphorylation may participate in the biosynthesis of phospholipids and triacylglycerols. May also act on ceramide-1-P, lysophosphatidic acid (LPA) and sphing-4-enine 1-phosphate/sphingosine-1-phosphate. This chain is Polyisoprenoid diphosphate/phosphate phosphohydrolase PLPP6 (plpp6), found in Danio rerio (Zebrafish).